Here is a 99-residue protein sequence, read N- to C-terminus: Nucleoid-associated protein EbfC (99 aa).

This sequence belongs to the YbaB/EbfC family. In terms of assembly, homodimer.

It is found in the cytoplasm. Its subcellular location is the nucleoid. Functionally, binds to DNA and alters its conformation. May be involved in regulation of gene expression, nucleoid organization and DNA protection. The chain is Nucleoid-associated protein EbfC from Borreliella burgdorferi (strain ZS7) (Borrelia burgdorferi).